A 226-amino-acid polypeptide reads, in one-letter code: Ribose-5-phosphate isomerase A (226 aa).

Residues 33–36, 86–89, and 99–102 contribute to the substrate site; these read TGST, DGAD, and KGGG. E108 serves as the catalytic Proton acceptor. Substrate is bound at residue K126.

Belongs to the ribose 5-phosphate isomerase family. As to quaternary structure, homodimer.

The catalysed reaction is aldehydo-D-ribose 5-phosphate = D-ribulose 5-phosphate. It participates in carbohydrate degradation; pentose phosphate pathway; D-ribose 5-phosphate from D-ribulose 5-phosphate (non-oxidative stage): step 1/1. In terms of biological role, catalyzes the reversible conversion of ribose-5-phosphate to ribulose 5-phosphate. The sequence is that of Ribose-5-phosphate isomerase A from Bordetella parapertussis (strain 12822 / ATCC BAA-587 / NCTC 13253).